The sequence spans 1058 residues: Ubiquitin-like modifier-activating enzyme 1 Y (1058 aa).

Residues 1-22 are disordered; sequence MSSSVLSKKRKVSGPDSSLDSS. ATP contacts are provided by residues Ala-477, Asp-503, Arg-514, Lys-527, and 575 to 576; that span reads DN. Catalysis depends on Cys-631, which acts as the Glycyl thioester intermediate.

The protein belongs to the ubiquitin-activating E1 family. As to quaternary structure, monomer. As to expression, expressed in testis in A spermatogonia and spermatids but not (or at very low levels) in pachytene spermatocytes. Also expressed in Y-bearing ovaries and at very low levels in adrenal gland.

The enzyme catalyses ATP + ubiquitin + [E1 ubiquitin-activating enzyme]-L-cysteine = AMP + diphosphate + S-ubiquitinyl-[E1 ubiquitin-activating enzyme]-L-cysteine.. Its pathway is protein modification; protein ubiquitination. Its function is as follows. Activates ubiquitin by first adenylating its C-terminal glycine residue with ATP, and thereafter linking this residue to the side chain of a cysteine residue in E1, yielding a ubiquitin-E1 thioester and free AMP. The Y chromosome form could be involved in the survival and proliferation of differentiating spermatogonia. This is Ubiquitin-like modifier-activating enzyme 1 Y (Uba1y) from Mus musculus (Mouse).